The sequence spans 1738 residues: Interaptin (1738 aa).

Positions 1–248 (MEHSTPLNEE…TYISLFPKVY (248 aa)) are actin-binding. Residues 1-1705 (MEHSTPLNEE…RIFPSKNTRP (1705 aa)) are Cytoplasmic-facing. Calponin-homology (CH) domains follow at residues 22 to 128 (IAQK…LRYQ) and 146 to 249 (TKPS…KVYQ). 3 disordered regions span residues 285-350 (SKST…SNLS), 1068-1090 (IQQLQSQLNEQRQQQSNQLSEKD), and 1589-1627 (LQQQKQQQQQPPTASSSPSSSPSLLSSTPTPKPQRPNQI). The segment covering 292–301 (QQNQQQQQQN) has biased composition (low complexity). Residues 302-316 (LLSPNSYRNSISFSK) show a composition bias toward polar residues. Low complexity-rich tracts occupy residues 317–344 (SPSFEGSQSTGSSRSISPISSPIKNSTT), 1068–1086 (IQQLQSQLNEQRQQQSNQL), and 1589–1617 (LQQQKQQQQQPPTASSSPSSSPSLLSSTP). Residues 373–1598 (EESRVIEKIV…LQQQKQQQQQ (1226 aa)) adopt a coiled-coil conformation. A helical; Anchor for type IV membrane protein membrane pass occupies residues 1706 to 1726 (IFDWRALFFIGAAVLAISTLF).

This sequence belongs to the alpha-actinin family.

It is found in the nucleus membrane. The protein localises to the endoplasmic reticulum membrane. It localises to the golgi apparatus. The protein resides in the golgi stack membrane. Its subcellular location is the cytoplasm. It is found in the cytoskeleton. The protein localises to the microtubule organizing center. It localises to the centrosome. In terms of biological role, may function as linker between cellular membranes and the actin cytoskeleton. Required for normal development of fruiting bodies. This is Interaptin (abpD) from Dictyostelium discoideum (Social amoeba).